Reading from the N-terminus, the 998-residue chain is Collagen alpha-1(I) chain (998 aa).

The tract at residues 1 to 998 (SYGYDEKGGV…GPPGPPGPPG (998 aa)) is disordered. The span at 9–22 (GVSVPGPMGPSGPR) shows a compositional bias: low complexity. A 4-hydroxyproline mark is found at Pro25, Pro28, Pro30, Pro39, Pro42, Pro45, Pro59, Pro74, Pro80, Pro89, and Pro95. Positions 62–76 (NGDDGEAGKPGRPGE) are enriched in basic and acidic residues. At Lys98 the chain carries 5-hydroxylysine; alternate. O-linked (Gal...) hydroxylysine; alternate glycosylation is present at Lys98. Phosphoserine is present on Ser104. A compositionally biased stretch (low complexity) spans 112–128 (DAGPAGPKGEPGSPGEN). 4-hydroxyproline occurs at positions 122, 125, 131, 140, 146, 167, 176, 179, 206, 209, 221, 227, 236, 242, 245, and 260. Over residues 146–164 (PGASGPAGARGNDGATGAA) the composition is skewed to low complexity. Positions 166 to 178 (PPGPTGPAGPPGF) are enriched in pro residues. Positions 212-251 (AGAAGPAGNPGADGQPGAKGANGAPGIAGAPGFPGARGPS) are enriched in low complexity. Lys263 is subject to 5-hydroxylysine. Pro269, Pro272, Pro284, Pro293, Pro308, Pro314, Pro323, and Pro329 each carry 4-hydroxyproline. The span at 318–327 (GERGGPGSRG) shows a compositional bias: gly residues. Position 338 is a 5-hydroxylysine (Lys338). Residues Pro347, Pro356, Pro362, Pro368, Pro377, Pro380, Pro389, Pro398, Pro404, Pro416, Pro425, Pro434, Pro437, Pro455, Pro472, Pro478, Pro484, Pro490, Pro496, Pro502, Pro514, Pro523, Pro537, Pro543, and Pro552 each carry the 4-hydroxyproline modification. Residues 371-397 (KGLTGSPGSPGPDGKTGPPGPAGQDGR) show a composition bias toward low complexity. Low complexity predominate over residues 406 to 425 (ARGQAGVMGFPGPKGAAGEP). The span at 484–493 (PGEAGKPGEQ) shows a compositional bias: low complexity. 5-hydroxylysine is present on Lys564. Residues Pro570, Pro585, and Pro591 each carry the 4-hydroxyproline modification. The span at 597 to 611 (SGPSGPAGPTGARGA) shows a compositional bias: low complexity. At Ser600 the chain carries Phosphoserine. 8 positions are modified to 4-hydroxyproline: Pro612, Pro618, Pro621, Pro630, Pro636, Pro654, Pro663, and Pro672. Over residues 624 to 651 (AGFAGPPGADGQPGAKGEPGDAGAKGDA) the composition is skewed to low complexity. The span at 653 to 665 (PPGPAGPTGPPGP) shows a compositional bias: pro residues. Position 675 is a 5-hydroxylysine (Lys675). Positions 680–696 (SAGPPGATGFPGAAGRV) are enriched in low complexity. Pro684 and Pro690 each carry 4-hydroxyproline. Pro698 is subject to 3-hydroxyproline. 4-hydroxyproline occurs at positions 699, 708, 711, 732, 741, 749, 758, 776, 785, 788, 794, 809, 815, 821, 830, and 836. Residues 725-734 (ETGPAGRPGE) are compositionally biased toward low complexity. Residues 746 to 758 (KGSPGADGPAGAP) show a composition bias toward low complexity. Pro residues predominate over residues 808-818 (PPGPMGPPGLA). 5-hydroxylysine is present on Lys845. Residues 853 to 868 (PGPPGAPGAPGAPGPV) are compositionally biased toward pro residues. 4-hydroxyproline occurs at positions 856, 859, and 862. Positions 889–903 (AGPAGARGPAGPQGP) are enriched in low complexity. Basic and acidic residues predominate over residues 904 to 918 (RGDKGETGEQGDRGI). Lys907 carries the post-translational modification 5-hydroxylysine. Lys919 is modified (5-hydroxylysine; alternate). Lys919 carries an O-linked (Gal...) hydroxylysine; alternate glycan. 4 positions are modified to 4-hydroxyproline: Pro934, Pro937, Pro955, and Pro970. The span at 937-970 (PGEQGPSGASGPAGPRGPPGSAGSPGKDGLNGLP) shows a compositional bias: low complexity. Position 975 is a 3-hydroxyproline (Pro975). The residue at position 976 (Pro976) is a 4-hydroxyproline. The segment covering 988–998 (VGPPGPPGPPG) has biased composition (pro residues). Pro990 is subject to 3-hydroxyproline. Pro991 is subject to 4-hydroxyproline. Position 993 is a 3-hydroxyproline (Pro993). Position 994 is a 4-hydroxyproline (Pro994). Residue Pro996 is modified to 3-hydroxyproline. Position 997 is a 4-hydroxyproline (Pro997).

Belongs to the fibrillar collagen family. In terms of assembly, trimers of one alpha 2(I) and two alpha 1(I) chains. In terms of processing, contains mostly 4-hydroxyproline. Proline residues at the third position of the tripeptide repeating unit (G-X-Y) are hydroxylated in some or all of the chains. Post-translationally, contains 3-hydroxyproline at a few sites. This modification occurs on the first proline residue in the sequence motif Gly-Pro-Hyp, where Hyp is 4-hydroxyproline. Lysine residues at the third position of the tripeptide repeating unit (G-X-Y) are 5-hydroxylated in some or all of the chains. In terms of processing, O-glycosylated on hydroxylated lysine residues. The O-linked glycan consists of a Glc-Gal disaccharide. Expressed in bones.

Its subcellular location is the secreted. The protein localises to the extracellular space. It is found in the extracellular matrix. In terms of biological role, type I collagen is a member of group I collagen (fibrillar forming collagen). The protein is Collagen alpha-1(I) chain of Nothrotheriops shastensis (Shasta ground sloth).